A 337-amino-acid chain; its full sequence is Glyceraldehyde-3-phosphate dehydrogenase, cytosolic (337 aa).

The segment at 1 to 151 is binding to NAD; sequence MAKVKVGING…YKSDLNIVSN (151 aa). Residues 13–14, Asp-35, and Arg-82 each bind NAD(+); that span reads RI. The interval 152–337 is catalytic; it reads ASCTTNCLAP…DLIMHISKCQ (186 aa). D-glyceraldehyde 3-phosphate is bound by residues 153–155, Thr-184, 213–214, and Arg-236; these read SCT and TG. The active-site Nucleophile is the Cys-154. Asn-318 serves as a coordination point for NAD(+).

The protein belongs to the glyceraldehyde-3-phosphate dehydrogenase family. In terms of assembly, homotetramer.

It localises to the cytoplasm. The catalysed reaction is D-glyceraldehyde 3-phosphate + phosphate + NAD(+) = (2R)-3-phospho-glyceroyl phosphate + NADH + H(+). It participates in carbohydrate degradation; glycolysis; pyruvate from D-glyceraldehyde 3-phosphate: step 1/5. Its function is as follows. Key enzyme in glycolysis that catalyzes the first step of the pathway by converting D-glyceraldehyde 3-phosphate (G3P) into 3-phospho-D-glyceroyl phosphate. Essential for the maintenance of cellular ATP levels and carbohydrate metabolism. The chain is Glyceraldehyde-3-phosphate dehydrogenase, cytosolic (GAPC) from Mesembryanthemum crystallinum (Common ice plant).